Here is a 143-residue protein sequence, read N- to C-terminus: Large ribosomal subunit protein uL11 (143 aa).

It belongs to the universal ribosomal protein uL11 family. As to quaternary structure, part of the ribosomal stalk of the 50S ribosomal subunit. Interacts with L10 and the large rRNA to form the base of the stalk. L10 forms an elongated spine to which L12 dimers bind in a sequential fashion forming a multimeric L10(L12)X complex. One or more lysine residues are methylated.

In terms of biological role, forms part of the ribosomal stalk which helps the ribosome interact with GTP-bound translation factors. The sequence is that of Large ribosomal subunit protein uL11 from Leptothrix cholodnii (strain ATCC 51168 / LMG 8142 / SP-6) (Leptothrix discophora (strain SP-6)).